The following is a 243-amino-acid chain: uncharacterized protein (243 aa).

The Bipartite nuclear localization signal motif lies at 207–224 (KKTSISGYKTLDVKRKFV).

This is an uncharacterized protein from Acheta domesticus (House cricket).